Reading from the N-terminus, the 160-residue chain is Nucleotide-binding protein CBU_0114 (160 aa).

The protein belongs to the YajQ family.

Its function is as follows. Nucleotide-binding protein. The chain is Nucleotide-binding protein CBU_0114 from Coxiella burnetii (strain RSA 493 / Nine Mile phase I).